The following is a 41-amino-acid chain: Large ribosomal subunit protein bL36 (41 aa).

This sequence belongs to the bacterial ribosomal protein bL36 family.

The protein is Large ribosomal subunit protein bL36 of Orientia tsutsugamushi (strain Boryong) (Rickettsia tsutsugamushi).